We begin with the raw amino-acid sequence, 289 residues long: Phosphate import ATP-binding protein PstB 2 (289 aa).

The ABC transporter domain maps to 37–276 (LHAKVEAFYY…HTPVIFQNPT (240 aa)). 69 to 76 (GPSGCGKS) contacts ATP.

Belongs to the ABC transporter superfamily. Phosphate importer (TC 3.A.1.7) family. As to quaternary structure, the complex is composed of two ATP-binding proteins (PstB), two transmembrane proteins (PstC and PstA) and a solute-binding protein (PstS).

It is found in the cell inner membrane. It carries out the reaction phosphate(out) + ATP + H2O = ADP + 2 phosphate(in) + H(+). Its function is as follows. Part of the ABC transporter complex PstSACB involved in phosphate import. Responsible for energy coupling to the transport system. The protein is Phosphate import ATP-binding protein PstB 2 of Trichormus variabilis (strain ATCC 29413 / PCC 7937) (Anabaena variabilis).